The primary structure comprises 255 residues: Na(+)-translocating NADH-quinone reductase subunit C (255 aa).

The helical transmembrane segment at 12-32 (LFVVIALSLVCSIIVSTAAVG) threads the bilayer. Thr-223 bears the FMN phosphoryl threonine mark.

It belongs to the NqrC family. In terms of assembly, composed of six subunits; NqrA, NqrB, NqrC, NqrD, NqrE and NqrF. It depends on FMN as a cofactor.

It is found in the cell inner membrane. The enzyme catalyses a ubiquinone + n Na(+)(in) + NADH + H(+) = a ubiquinol + n Na(+)(out) + NAD(+). NQR complex catalyzes the reduction of ubiquinone-1 to ubiquinol by two successive reactions, coupled with the transport of Na(+) ions from the cytoplasm to the periplasm. NqrA to NqrE are probably involved in the second step, the conversion of ubisemiquinone to ubiquinol. The sequence is that of Na(+)-translocating NADH-quinone reductase subunit C from Vibrio anguillarum (Listonella anguillarum).